We begin with the raw amino-acid sequence, 339 residues long: Holliday junction branch migration complex subunit RuvB (339 aa).

A large ATPase domain (RuvB-L) region spans residues 1–187 (MQGFEDENRI…FGVICKLDYY (187 aa)). ATP contacts are provided by residues leucine 26, arginine 27, glycine 68, lysine 71, threonine 72, threonine 73, 134–136 (EDF), arginine 177, tyrosine 187, and arginine 224. Threonine 72 serves as a coordination point for Mg(2+). The tract at residues 188 to 258 (TVDELSKIVL…VAKDALELLG (71 aa)) is small ATPAse domain (RuvB-S). Positions 261–339 (SLGLDFVDEK…HLKIPYPNEK (79 aa)) are head domain (RuvB-H). Residues arginine 297, arginine 316, and arginine 321 each coordinate DNA.

This sequence belongs to the RuvB family. In terms of assembly, homohexamer. Forms an RuvA(8)-RuvB(12)-Holliday junction (HJ) complex. HJ DNA is sandwiched between 2 RuvA tetramers; dsDNA enters through RuvA and exits via RuvB. An RuvB hexamer assembles on each DNA strand where it exits the tetramer. Each RuvB hexamer is contacted by two RuvA subunits (via domain III) on 2 adjacent RuvB subunits; this complex drives branch migration. In the full resolvosome a probable DNA-RuvA(4)-RuvB(12)-RuvC(2) complex forms which resolves the HJ.

The protein localises to the cytoplasm. It catalyses the reaction ATP + H2O = ADP + phosphate + H(+). Its function is as follows. The RuvA-RuvB-RuvC complex processes Holliday junction (HJ) DNA during genetic recombination and DNA repair, while the RuvA-RuvB complex plays an important role in the rescue of blocked DNA replication forks via replication fork reversal (RFR). RuvA specifically binds to HJ cruciform DNA, conferring on it an open structure. The RuvB hexamer acts as an ATP-dependent pump, pulling dsDNA into and through the RuvAB complex. RuvB forms 2 homohexamers on either side of HJ DNA bound by 1 or 2 RuvA tetramers; 4 subunits per hexamer contact DNA at a time. Coordinated motions by a converter formed by DNA-disengaged RuvB subunits stimulates ATP hydrolysis and nucleotide exchange. Immobilization of the converter enables RuvB to convert the ATP-contained energy into a lever motion, pulling 2 nucleotides of DNA out of the RuvA tetramer per ATP hydrolyzed, thus driving DNA branch migration. The RuvB motors rotate together with the DNA substrate, which together with the progressing nucleotide cycle form the mechanistic basis for DNA recombination by continuous HJ branch migration. Branch migration allows RuvC to scan DNA until it finds its consensus sequence, where it cleaves and resolves cruciform DNA. This chain is Holliday junction branch migration complex subunit RuvB, found in Clostridioides difficile (strain 630) (Peptoclostridium difficile).